We begin with the raw amino-acid sequence, 260 residues long: Proteasome subunit alpha (260 aa).

Belongs to the peptidase T1A family. The 20S proteasome core is composed of 14 alpha and 14 beta subunits that assemble into four stacked heptameric rings, resulting in a barrel-shaped structure. The two inner rings, each composed of seven catalytic beta subunits, are sandwiched by two outer rings, each composed of seven alpha subunits. The catalytic chamber with the active sites is on the inside of the barrel. Has a gated structure, the ends of the cylinder being occluded by the N-termini of the alpha-subunits. Is capped at one or both ends by the proteasome regulatory ATPase, PAN.

Its subcellular location is the cytoplasm. The formation of the proteasomal ATPase PAN-20S proteasome complex, via the docking of the C-termini of PAN into the intersubunit pockets in the alpha-rings, triggers opening of the gate for substrate entry. Interconversion between the open-gate and close-gate conformations leads to a dynamic regulation of the 20S proteasome proteolysis activity. Functionally, component of the proteasome core, a large protease complex with broad specificity involved in protein degradation. In Pyrococcus abyssi (strain GE5 / Orsay), this protein is Proteasome subunit alpha.